Here is an 81-residue protein sequence, read N- to C-terminus: Acyl carrier protein (81 aa).

One can recognise a Carrier domain in the interval 4–79 (SEILEKVKAI…DVLDFINNKV (76 aa)). Serine 39 carries the O-(pantetheine 4'-phosphoryl)serine modification.

This sequence belongs to the acyl carrier protein (ACP) family. 4'-phosphopantetheine is transferred from CoA to a specific serine of apo-ACP by AcpS. This modification is essential for activity because fatty acids are bound in thioester linkage to the sulfhydryl of the prosthetic group.

Its subcellular location is the cytoplasm. It participates in lipid metabolism; fatty acid biosynthesis. Functionally, carrier of the growing fatty acid chain in fatty acid biosynthesis. The chain is Acyl carrier protein from Thermosynechococcus vestitus (strain NIES-2133 / IAM M-273 / BP-1).